The following is a 243-amino-acid chain: DNA repair protein RecO (243 aa).

This sequence belongs to the RecO family.

In terms of biological role, involved in DNA repair and RecF pathway recombination. This chain is DNA repair protein RecO, found in Xylella fastidiosa (strain M23).